The sequence spans 157 residues: Peptide methionine sulfoxide reductase MsrA (157 aa).

The active site involves Cys13.

The protein belongs to the MsrA Met sulfoxide reductase family.

The enzyme catalyses L-methionyl-[protein] + [thioredoxin]-disulfide + H2O = L-methionyl-(S)-S-oxide-[protein] + [thioredoxin]-dithiol. It carries out the reaction [thioredoxin]-disulfide + L-methionine + H2O = L-methionine (S)-S-oxide + [thioredoxin]-dithiol. Functionally, has an important function as a repair enzyme for proteins that have been inactivated by oxidation. Catalyzes the reversible oxidation-reduction of methionine sulfoxide in proteins to methionine. The polypeptide is Peptide methionine sulfoxide reductase MsrA (Methanococcus maripaludis (strain C6 / ATCC BAA-1332)).